The following is a 153-amino-acid chain: MKQGDRQTVMDIHEILKYLPHRYPLILVDRVVSLESGKRIHAYKNVSINEPYFSGHFPHHPVMPGVLIIEALAQAAALLTIRSENMEKDNGQVYYFVGIDAVRFKKPVIAGDQLVLKVEITRQLKGIWKYAACAEVDGQVVTEAQLMCTARAI.

The active site involves His56.

Belongs to the thioester dehydratase family. FabZ subfamily.

It is found in the cytoplasm. It carries out the reaction a (3R)-hydroxyacyl-[ACP] = a (2E)-enoyl-[ACP] + H2O. In terms of biological role, involved in unsaturated fatty acids biosynthesis. Catalyzes the dehydration of short chain beta-hydroxyacyl-ACPs and long chain saturated and unsaturated beta-hydroxyacyl-ACPs. This chain is 3-hydroxyacyl-[acyl-carrier-protein] dehydratase FabZ, found in Nitrosomonas europaea (strain ATCC 19718 / CIP 103999 / KCTC 2705 / NBRC 14298).